A 557-amino-acid chain; its full sequence is Enhancer of polycomb-like protein 1 (557 aa).

Disordered stretches follow at residues 323–349 (VKPA…RPQP) and 424–449 (QSHN…TYST). A compositionally biased stretch (pro residues) spans 327–337 (APVPTPAPPVK). Over residues 429–441 (LSIPSSTPSTPLS) the composition is skewed to low complexity.

This sequence belongs to the enhancer of polycomb family. Component of the NuA4 histone acetyltransferase complex.

The protein resides in the nucleus. Component of the NuA4 histone acetyltransferase complex which is involved in transcriptional activation of selected genes principally by acetylation of nucleosomal histone H4 and H2A. The NuA4 complex is also involved in DNA repair. Involved in gene silencing by neighboring heterochromatin, blockage of the silencing spreading along the chromosome, and required for cell cycle progression through G2/M. The polypeptide is Enhancer of polycomb-like protein 1 (epl1) (Schizosaccharomyces pombe (strain 972 / ATCC 24843) (Fission yeast)).